A 411-amino-acid polypeptide reads, in one-letter code: Secretion apparatus protein BsaZ (411 aa).

Helical transmembrane passes span 28–48, 80–100, 137–157, and 175–195; these read IVAL…VDLT, IAAP…LVQS, ALLY…LYHA, and IVLT…VLIL. The disordered stretch occupies residues 341–411; that stretch reads AANRGGPPPE…APARTGDQNA (71 aa). The segment covering 370 to 404 has biased composition (low complexity); sequence DACADNAFPDDAPPGAAAPNAGSPDSPAPDGGAPA.

Belongs to the type III secretion exporter family.

It is found in the cell membrane. In terms of biological role, part of the bsa type III secretion system, is involved in the intracellular replication of invading bacteria inside the host cell. Probably necessary for the lysis of the vacuole membrane and escape into the host cell cytoplasm. This is Secretion apparatus protein BsaZ (bsaZ) from Burkholderia mallei (strain NCTC 10247).